A 445-amino-acid polypeptide reads, in one-letter code: Glycine--tRNA ligase (445 aa).

Substrate-binding residues include arginine 97 and glutamate 145. ATP is bound by residues 177–179 (RNE), 187–192 (FRTCEF), 262–263 (EI), and 308–311 (GLTR). Position 192–196 (192–196 (FEQME)) interacts with substrate. 304–308 (ETSAG) is a binding site for substrate.

This sequence belongs to the class-II aminoacyl-tRNA synthetase family. In terms of assembly, homodimer.

It localises to the cytoplasm. It carries out the reaction tRNA(Gly) + glycine + ATP = glycyl-tRNA(Gly) + AMP + diphosphate. Its function is as follows. Catalyzes the attachment of glycine to tRNA(Gly). This Borreliella afzelii (strain PKo) (Borrelia afzelii) protein is Glycine--tRNA ligase.